We begin with the raw amino-acid sequence, 150 residues long: S-protein homolog 3 (150 aa).

An N-terminal signal peptide occupies residues 1 to 23 (MKNILKTQVHVVVIYLLIKIAFS). 2 N-linked (GlcNAc...) asparagine glycosylation sites follow: Asn-32 and Asn-70.

This sequence belongs to the plant self-incompatibility (S1) protein family.

Its subcellular location is the secreted. The protein is S-protein homolog 3 of Arabidopsis thaliana (Mouse-ear cress).